The following is a 127-amino-acid chain: Large ribosomal subunit protein eL18 (127 aa).

It belongs to the eukaryotic ribosomal protein eL18 family.

The protein is Large ribosomal subunit protein eL18 of Methanopyrus kandleri (strain AV19 / DSM 6324 / JCM 9639 / NBRC 100938).